We begin with the raw amino-acid sequence, 282 residues long: Parvulin-like PPIase (282 aa).

Residues 1-20 form the signal peptide; it reads MKKLSVIFLSVSMLSGIAFA. A PpiC domain is found at 138-231; sequence KEQIKVAHIL…FGWHIIKVLE (94 aa).

It belongs to the PpiC/parvulin rotamase family.

It is found in the cell outer membrane. It catalyses the reaction [protein]-peptidylproline (omega=180) = [protein]-peptidylproline (omega=0). The chain is Parvulin-like PPIase (plp) from Rickettsia conorii (strain ATCC VR-613 / Malish 7).